Here is a 339-residue protein sequence, read N- to C-terminus: Annexin A2 (339 aa).

Position 2 is an N-acetylserine (serine 2). Positions 2 to 24 are S100A10-binding site; that stretch reads STVHEILCKLSLEGDHSTPPSAY. At tyrosine 24 the chain carries Phosphotyrosine; by SRC. Residue serine 26 is modified to Phosphoserine; by PKC. Annexin repeat units follow at residues 33–104 and 105–176; these read FDAE…GLLK and TPAQ…ALAK. Lysine 49 bears the N6-acetyllysine; alternate mark. Lysine 49 is covalently cross-linked (Glycyl lysine isopeptide (Lys-Gly) (interchain with G-Cter in SUMO1); alternate). Lysine 49 is covalently cross-linked (Glycyl lysine isopeptide (Lys-Gly) (interchain with G-Cter in SUMO2); alternate). Lysine 152 is modified (N6-acetyllysine). Serine 184 is subject to Phosphoserine. Annexin repeat units follow at residues 189 to 261 and 265 to 336; these read ELID…NLVQ and NKPL…YLCG. Phosphotyrosine is present on tyrosine 199. Lysine 227 carries the post-translational modification N6-acetyllysine.

This sequence belongs to the annexin family. As to quaternary structure, heterotetramer containing 2 light chains of S100A10/p11 and 2 heavy chains of ANXA2/p36. Interacts with ATP1B1. Interacts with DYSF. Interacts with COCH. Interacts (via repeat Annexin 1) with PCSK9 (via the C-terminal domain); the interaction inhibits the degradation of LDLR. Interacts with CEACAM1 (via the cytoplasmic domain); this interaction is regulated by phosphorylation of CEACAM1. Interacts with APPL2 and APPL1; targets APPL2 to endosomes and acting in parallel to RAB5A. Interacts with S100A4. May interact with UBAP2. Interacts with PLEKHG4B; this interaction is required for PLEKHG4B localization to cell-cell adhesions. In terms of assembly, (Microbial infection) Interacts with human cytomegalovirus (HCMV). (Microbial infection) Interacts with M.pneumoniae CARDS toxin; CARDS probably uses this protein as a receptor. A portion of internalized CARDS remains associated with intracellular annexin 2. Post-translationally, phosphorylation of Tyr-24 enhances heat stress-induced translocation to the cell surface. In terms of processing, ISGylated.

It is found in the secreted. It localises to the extracellular space. The protein localises to the extracellular matrix. The protein resides in the basement membrane. Its subcellular location is the melanosome. Functionally, calcium-regulated membrane-binding protein whose affinity for calcium is greatly enhanced by anionic phospholipids. It binds two calcium ions with high affinity. May be involved in heat-stress response. Inhibits PCSK9-enhanced LDLR degradation, probably reduces PCSK9 protein levels via a translational mechanism but also competes with LDLR for binding with PCSK9. Binds to endosomes damaged by phagocytosis of particulate wear debris and participates in endosomal membrane stabilization, thereby limiting NLRP3 inflammasome activation. Required for endothelial cell surface plasmin generation and may support fibrinolytic surveillance and neoangiogenesis. In terms of biological role, (Microbial infection) Binds M.pneumoniae CARDS toxin, probably serves as one receptor for this pathogen. When ANXA2 is down-regulated by siRNA, less toxin binds to human cells and less vacuolization (a symptom of M.pneumoniae infection) is seen. The protein is Annexin A2 (ANXA2) of Homo sapiens (Human).